The primary structure comprises 54 residues: uncharacterized protein (54 aa).

The first 21 residues, 1–21, serve as a signal peptide directing secretion; sequence MNSKQILSLSAFAMTIATAAA. The Extracellular segment spans residues 22–29; the sequence is GNWNAGDT. A helical transmembrane segment spans residues 30–50; that stretch reads IALLIGIAMFFVLLLALLGWI. Topologically, residues 51 to 54 are cytoplasmic; that stretch reads SRKK.

It is found in the membrane. This is an uncharacterized protein from Dictyostelium discoideum (Social amoeba).